Consider the following 404-residue polypeptide: MSYSCGLPNLSCRTSCSSRPCVPPSCHGCTLPGACNIPANVSNCNWFCEGSFNGSEKETMQFLNDRLASYLEKVRQLERDNAELENLIRERSQQQEPLVCASYQSYFKTIEELQQKILCTKSENARLVVQIDNAKLASDDFRTKYETELSLRQLVESDINGLRRILDELTLCRSDLEAQVESLKEELLCLKQNHEQEVNTLRCQLGGRLNVEVDAAPAVDLNQVLNETRSQYEALVETNRREVEQWFATQTEELNKQVVSSSEQLQSYQVEIIELRRTVNALEIELQAQHNLRDSLENTLTESEARYSSQLSQVQRLITNVESQLAEIRSDLERQNQEYQVLLDVRARLECEINTYRSLLESEDCKLPSNPCAITNACDKSTGPCISNPCGPRARCGPCNTFGY.

The segment at 1–56 is head; the sequence is MSYSCGLPNLSCRTSCSSRPCVPPSCHGCTLPGACNIPANVSNCNWFCEGSFNGSE. Residues 56-367 form the IF rod domain; that stretch reads EKETMQFLND…SLLESEDCKL (312 aa). A coil 1A region spans residues 57 to 91; that stretch reads KETMQFLNDRLASYLEKVRQLERDNAELENLIRER. Residues 92–102 form a linker 1 region; sequence SQQQEPLVCAS. Residues 103 to 203 are coil 1B; the sequence is YQSYFKTIEE…HEQEVNTLRC (101 aa). A linker 12 region spans residues 204 to 219; that stretch reads QLGGRLNVEVDAAPAV. The tract at residues 220-363 is coil 2; sequence DLNQVLNETR…NTYRSLLESE (144 aa). The segment at 364–404 is tail; the sequence is DCKLPSNPCAITNACDKSTGPCISNPCGPRARCGPCNTFGY.

It belongs to the intermediate filament family.

The chain is Keratin, type I cuticular Ha3-I from Pan troglodytes (Chimpanzee).